A 575-amino-acid polypeptide reads, in one-letter code: Phosphoenolpyruvate-protein phosphotransferase (575 aa).

The active-site Tele-phosphohistidine intermediate is His191. Residues Arg298 and Arg334 each coordinate phosphoenolpyruvate. Residues Glu435 and Asp459 each coordinate Mg(2+). Phosphoenolpyruvate is bound by residues 458-459 (ND) and Arg469. The active-site Proton donor is the Cys506.

It belongs to the PEP-utilizing enzyme family. In terms of assembly, homodimer. Mg(2+) serves as cofactor.

The protein localises to the cytoplasm. The enzyme catalyses L-histidyl-[protein] + phosphoenolpyruvate = N(pros)-phospho-L-histidyl-[protein] + pyruvate. General (non sugar-specific) component of the phosphoenolpyruvate-dependent sugar phosphotransferase system (sugar PTS). This major carbohydrate active-transport system catalyzes the phosphorylation of incoming sugar substrates concomitantly with their translocation across the cell membrane. Enzyme I transfers the phosphoryl group from phosphoenolpyruvate (PEP) to the phosphoryl carrier protein (HPr). The chain is Phosphoenolpyruvate-protein phosphotransferase (ptsI) from Lactococcus lactis subsp. cremoris (Streptococcus cremoris).